We begin with the raw amino-acid sequence, 344 residues long: Flavonoid 7-O-methyltransferase 1B (344 aa).

S-adenosyl-L-methionine is bound at residue aspartate 211. Catalysis depends on histidine 249, which acts as the Proton acceptor.

Belongs to the class I-like SAM-binding methyltransferase superfamily. Cation-independent O-methyltransferase family. In terms of assembly, homodimer.

The catalysed reaction is scutellarein + S-adenosyl-L-methionine = scutellarein 7-methyl ether + S-adenosyl-L-homocysteine. It carries out the reaction 4',7,8-trihydroxyflavone + S-adenosyl-L-methionine = 4',8-dihydroxy-7-methoxyflavone + S-adenosyl-L-homocysteine. It catalyses the reaction isorhamnetin + S-adenosyl-L-methionine = rhamnacene + S-adenosyl-L-homocysteine + H(+). The enzyme catalyses kaempferol + S-adenosyl-L-methionine = kaempferol 7-methyl ether + S-adenosyl-L-homocysteine + H(+). The catalysed reaction is (2S)-naringenin + S-adenosyl-L-methionine = (2S)-sakuranetin + S-adenosyl-L-homocysteine + H(+). It carries out the reaction quercetin + S-adenosyl-L-methionine = rhamnetin + S-adenosyl-L-homocysteine + H(+). It catalyses the reaction apigenin + S-adenosyl-L-methionine = genkwanin + S-adenosyl-L-homocysteine + H(+). The enzyme catalyses luteolin + S-adenosyl-L-methionine = luteolin 7-methyl ether + S-adenosyl-L-homocysteine + H(+). It functions in the pathway flavonoid metabolism. Functionally, flavonoid 7-O-methyltransferase involved in the biosynthesis of polymethoxylated flavonoids natural products such as pebrellin, aroma compounds which contribute to the flavor of peppermint, and exhibit pharmacological activities such as anti-allergic, anti-oxidant, antibacterial, anti-proliferative, and anti-inflammatory effects. Catalyzes S-adenosylmethionine-dependent regioselective 7-O-methylation of flavonoids; active on various hydroxylated flavonoid substrates, including luteolin (LUT), quercetin, kaempferol, isorhamnetin, apigenin (API), scutellarein (6-hydroxy-apigenin, 6-OH-API, SCU), 7,8,4'-trihydroxy-flavone and naringenin (NAR), and, with a lower efficiency, 7,8,3',4'-tetrahydroxy-flavone, taxifolin and hesperetin. This is Flavonoid 7-O-methyltransferase 1B from Mentha piperita (Peppermint).